The following is a 216-amino-acid chain: Adenylate kinase (216 aa).

An ATP-binding site is contributed by 11-16 (GSGKGT). Residues 31 to 60 (ATGDLFRKAIECGDELGDTVKSYMERGELV) form an NMP region. Residues Thr32, Arg37, 58–60 (ELV), 86–89 (GFPR), and Gln93 each bind AMP. The LID stretch occupies residues 127 to 163 (GRWVCRSCQSPYQSGCAEVTKGKCSRCQGGLYQRPDD). Arg128 contacts ATP. Residues Cys131, Cys134, Cys150, and Cys153 each coordinate Zn(2+). Arg160 and Arg171 together coordinate AMP. An ATP-binding site is contributed by Ala199.

It belongs to the adenylate kinase family. In terms of assembly, monomer.

The protein resides in the cytoplasm. The enzyme catalyses AMP + ATP = 2 ADP. It functions in the pathway purine metabolism; AMP biosynthesis via salvage pathway; AMP from ADP: step 1/1. Functionally, catalyzes the reversible transfer of the terminal phosphate group between ATP and AMP. Plays an important role in cellular energy homeostasis and in adenine nucleotide metabolism. This Dehalococcoides mccartyi (strain CBDB1) protein is Adenylate kinase.